The sequence spans 223 residues: Voltage-dependent calcium channel gamma-1 subunit (223 aa).

Residues 1 to 10 (MSQTKTLKVR) are Cytoplasmic-facing. A helical membrane pass occupies residues 11-29 (VALLCILVGIVLALVAVVT). Topologically, residues 30 to 109 (DHWAVLSPHV…TQKEYSISAA (80 aa)) are extracellular. N-linked (GlcNAc...) asparagine glycosylation is found at asparagine 43 and asparagine 80. Cysteine 57 and cysteine 81 are joined by a disulfide. A helical membrane pass occupies residues 110 to 130 (AIAIFSLGFIIVGTLCALLSF). Residues 131 to 135 (RKKRD) lie on the Cytoplasmic side of the membrane. Residues 136–156 (YLLRPASMFYIFAGLCLSVSA) traverse the membrane as a helical segment. The Extracellular portion of the chain corresponds to 157-180 (EVMRQSVQRMVDSEHTAWIAHSLA). A helical transmembrane segment spans residues 181-205 (WSFICACVAAALLLVGGLALLLLAL). The Cytoplasmic segment spans residues 206 to 223 (PRMPRDPWESCMDAEPEH).

The protein belongs to the PMP-22/EMP/MP20 family. CACNG subfamily. Component of a calcium channel complex consisting of a pore-forming alpha subunit (CACNA1S) and the ancillary subunits CACNB1 or CACNB2, CACNG1 and CACNA2D1. The channel complex contains alpha, beta, gamma and delta subunits in a 1:1:1:1 ratio, i.e. it contains either CACNB1 or CACNB2. N-glycosylated.

Its subcellular location is the cell membrane. It is found in the sarcolemma. In terms of biological role, regulatory subunit of the voltage-gated calcium channel that gives rise to L-type calcium currents in skeletal muscle. Regulates channel inactivation kinetics. In Bos taurus (Bovine), this protein is Voltage-dependent calcium channel gamma-1 subunit (CACNG1).